The sequence spans 4700 residues: MANVQVAVRVRPLSKRETKEGGRIIVEVDGKVAKIRNLKVDNRPDGFGDSREKVMAFGFDYCYWSVNPEDPQYASQDVVFQDLGMEVLSGVAKGYNICLFAYGQTGSGKTYTMLGTPASVGLTPRICEGLFVREKDCASLPSSCRIKVSFLEIYNERVRDLLKQSGQKKSYTLRVREHPEMGPYVQGLSQHVVTNYKQVIQLLEEGIANRITAATHVHEASSRSHAIFTIHYTQAILENNLPSEMASKINLVDLAGSERADPSYCKDRIAEGANINKSLVTLGIVISTLAQNSQVFSSCQSLNSSVSNGGDSGILSSPSGTSSGGAPSRRQSYIPYRDSVLTWLLKDSLGGNSKTIMVATVSPAHTSYSETMSTLRYASSAKNIINKPRVNEDANLKLIRELREEIERLKALLLSFELRNFSSLSDENLKELVLQNELKIDQLTKDWTQKWNDWQALMEHYSVDINRRRAGVVIDSSLPHLMALEDDVLSTGVVLYHLKEGTTKIGRIDSDQEQDIVLQGQWIERDHCTITSACGVVVLRPARGARCTVNGREVTASCRLTQGAVITLGKAQKFRFNHPAEAAVLRQRRQVGEAAAGRGSLEWLDLDGDLAASRLGLSPLLWKERRALEEQCDEDHQTPRDGETSHRAQIQQQQSYVEDLRHQILAEEIRAAKELEFDQAWISQQIKENQQCLLREETWLASLQQQQQEDQVAEKELEASVALDAWLQTDPEIQPSPFVQSQKRVVHLQLLRRHTLRAAERNVRRKKVSFQLERIIKKQRLLEAQKRLEKLTTLCWLQDDSTQEPPYQVLSPDATVPRPPCRSKLTSCSSLSPQRLCSKHMPQLHSIFLSWDPSTTLPPRPDPTHQTSEKTSSEEHLPQAASYPARTGCLRKNGLHSSGHGQPCTARAALARKGASAPDACLTMSPNSVGIQEMEMGVKQPHQMVSQGLASLRKSANKLKPRHEPKIFTSTTQTRGAKGLADPSHTQAGWRKEGNLGTHKAAKGASCNSLYPHGPRQTAGHGKAVKTFWTEYKPPSPSRASKRHQRVLATRVRNITKKSSHLPLGSPLKRQQNTRDPDTMVPLTDFSPVMDHSREKDNDLSDTDSNYSLDSLSCVYAKALIEPLKPEERKWDFPEPENSESDDSQLSEDSLAEKRYQSPKNRLGGNRPTNNRGQPRTRTRASVRGFTAASDSDLLAQTHRSFSLDSLIDAEEELGEDQQEEPFPGSADEIPTETFWHLEDSSLPVMDQEAICRLGPINYRTAARLDAVLPMSSSFYLDPQFQPHCELQPHCELQPHCELQPHCEQAESQVEPSYSEQADSLQGMQLSRESPLMSMDSWFSCDSKINPSSPPGIVGSLCPSPDMQEFHSCKGERPGYWPNTEELKPSDAETVLPYSSKLHQGSTELLCSARDEHTASAADTSRLSLWGIQRLIQPGADGTFQGRCIPDMTQQGSSEASHNSSVSNVLAASATTLTHVGSTHERDWSALQQKYLLELSCPVLEAIGAPKPAYPYLEEDSGSLAQASSKGGDTLLPVGPRVSSNLNLNNFPVHLSRIRRLRAEKEQDSLNAKLEGVSDFFSTSEKEASYDETYSADLESLSASRSTNAQVFATENAIPDSMTEACEVKQNNLEECLQSCRKPGLMTSSDEDFFQKNACHSNVTTATKADHWSQGWAPLRKNSAVQPGQLSPDSHYPLEEEKTDCQESSKEAVRRHINVSFALPSGPELYLHSAPWNPLSSSLQPPLLETFYVTKSRDALTETALEIPACREVRVPSPPPREAWGFGHNHQALQGAYLKNNLPVLLQNQNSKIASSQQVTAEIPVDLNTREVIRESGKCPGNITEESHDSVYSSVTQNRHFLPSTSTKVCEFENQVVILNKKHSFPALEGGEVTAQSCCGASSDSTESGKSLLFRESEAREEEELDQNTVLRQTINVSLEKDMPGESAVSLKSRSVDRRVSSPVMVAQGGGPTPKWEGKNETGLLEKGLRPKDSSEEFKLPGTKPAYERFQLVACPQERNPSECKSQEMLNPNREPSGKKQNKRVNNTDEMARLIRSVMQLENGILEIESKQNKQVHASHTPGTDKELVFQDQKEQEKTDHAFRPDSSGNPLPSKDQPSSPRQTDDTVFRDSEAGAMEVNSIGNHPQVQKITPNPFRSREGVRESEPVREHTHPAGSDRPARDICDSLGKHTTCREFTNTSLHPQRMKALARALPLQPRLERSSKNNGQFVKASASLKGQPWGLGSLEELETVKGFQESQVAEHVSSSNQEEPKAQGKVEEMPMQRGGSLQEENKVTQKFPSLSQLCRDTFFRQETVSPLLSRTEFCTAPLHQDLSNTLPLNSPRWPRRCLHVPVALGISSLDCVLDLTMLKIHNSPLVTGVEHQDQSTETRSHSPEGNVRGRSSEAHTAWCGSVRSMAMGSHSQSGVPESIPLGTEDRISASTSPQDHGKDLRITLLGFSTSEDFASEAEVAVQKEIRVSSLNKVSSQPEKRVSFSLEEDSDQASKPRQKAEKETEDVGLTSGVSLAPVSLPRVPSPEPRLLEPSDHASMCLAILEEIRQAKAQRKQLHDFVARGTVLSYCETLLEPECSSRVAGRPQCKQIDQSSSDQTRNEGEAPGFHVASLSAEAGQIDLLPDERKVQATSLSADSFESLPNTETDREPWDPVQAFSHAAPAQDRKRRTGELRQFAGASEPFICHSSSSEIIEKKKDATRTPSSADPLAPDSPRSSAPVEEVRRVVSKKVVAALPSQAPYDDPRVTLHELSQSVPQETAEGIPPGSQDSSPEHQEPRTLDTTYGEVSDNLLVTAQGEKTAHFESQSVTCDVQNSTSASGPKQDHVQCPEASTGFEEGRASPKQDTILPGALTRVALEAPTQQCVQCKESVGSGLTEVCRAGSKHSRPIPLPDQRPSANPGGIGEEAPCRHPREALDGPVFSRNPEGSRTLSPSRGKESRTLPCRQPCSSQPVATHAYSSHSSTLLCFRDGDLGKEPFKAAPHTIHPPCVVPSRAYEMDETGEISRGPDVHLTHGLEPKDVNREFRLTESSTCEPSTVAAVLSRAQGCRSPSAPDVRTGSFSHSATDGSVGLIGVPEKKVAEKQASTELEAASFPAGMYSEPLRQFRDSSVGDQNAQVCQTNPEPPATTQGPHTLDLSEGSAESKLVVEPQHECLENTTRCFLEKPQFSTELRDHNRLDSQAKFVARLKHTCSPQEDSPWQEEEQHRDQASGGGEGFAQGVNPLPDEDGLDGCQILDAGREEVAVAKPPVSKILSQGFKDPATVSLRQNETPQPAAQRSGHLYTGREQPAPNHRGSLPVTTIFSGPKHSRSSPTPQFSVVGSSRSLQELNLSVEPPSPTDEDTQGPNRLWNPHLRGYSSGKSVARTSLQAEDSNQKASSRLDDGTTDHRHLKPATPPYPMPSTLSHMPTPDFTTSWMSGTLEQAQQGKREKLGVQVRPENWCSQMDKGMLHFGSSDISPYALPWRPEEPARISWKQYMSGSAVDVSCSQKPQGLTLSNVARCSSMDNGLEDQNSPFHSHLSTYANICDLSTTHSSTENAQGSNEAWEVFRGSSSIALGDPHIPTSPEGVAPTSGHDRRPQFRGPSGEADCLRSKPPLAKGSAAGPVDEIMLLYPSEAGCPVGQTRTNTFEQGTQTLGSRRHWSSTDISFAQPEASAVSAFDLASWTSMHNLSLHLSQLLHSTSELLGSLSQPDVARREQNTKRDIPDKAPQALMMDGSTQTTVDEGSQTDLTLPTLCLQTSEAEPQGANVILEGLGSDTSTVSQEEGDVPGVPQKREAEETAQKMAQLLYLQEESTPYKPQSPSIPSSHLRFQKAPVGQHLPSVSPSVSDAFLPPSSQPEESYCLVVSSPSPSSPHSPGLFPSTSEYPGDSRVQKKLGPTSALFVDRASSPILTLSASTQEPGLSPGSLTLSAPSTHPVEGHQKLDSSPDPVDAPRTPMDNYSQTTDELGGSQRGRSSLQRSNGRSFLELHSPHSPQQSPKLQFSFLGQHPQQLQPRTTIGVQSRLLPPPLRHRSQRLGNSFVPEKVASPEHCPLSGREPSQWQSRTENGGESSASPGEPQRTLDRPSSWGGLQHLSPCPVSELTDTAGLRGSALGLPQACQPEELLCFSCQMCMAPEHQHHSLRDLPVHNKFSNWCGVQKGSPGGLDMTEEELGASGDLSSEKQEQSPPQPPNDHSQDSEWSKREQIPLQVGAQNLSLSVELTEAKLHHGFGEADALLQVLQSGTGEALAADEPVTSTWKELYARQKKAIETLRRERAERLGNFCRTRSLSPQKQLSLLPNKDLFIWDLDLPSRRREYLQQLRKDVVETTRSPESVSRSAHTPSDIELMLQDYQQAHEEAKVEIARARDQLRERTEQEKLRIHQKIISQLLKEEDKLHTLANSSSLCTSSNGSLSSGMTSGYNSSPALSGQLQFPENMGHTNLPDSRDVWIGDERGGHSAVRKNSAYSHRASLGSCCCSPSSLSSLGTCFSSSYQDLAKHVVDTSMADVMAACSDNLHNLFSCQATAGWNYQGEEQAVQLYYKVFSPTRHGFLGAGVVSQPLSRVWAAVSDPTVWPLYYKPIQTARLHQRVTNSISLVYLVCNTTLCALKQPRDFCCVCVEAKEGHLSVMAAQSVYDTSMPRPSRKMVRGEILPSAWILQPITVEGKEVTRVIYLAQVELGAPGFPPQLLSSFIKRQPLVIARLASFLGR.

The Kinesin motor domain maps to 3 to 384 (NVQVAVRVRP…LRYASSAKNI (382 aa)). Residue 103–110 (GQTGSGKT) coordinates ATP. A compositionally biased stretch (low complexity) spans 310 to 328 (GDSGILSSPSGTSSGGAPS). The interval 310 to 331 (GDSGILSSPSGTSSGGAPSRRQ) is disordered. In terms of domain architecture, FHA spans 498 to 569 (LKEGTTKIGR…LTQGAVITLG (72 aa)). Composition is skewed to basic and acidic residues over residues 631 to 646 (QCDE…ETSH) and 867 to 877 (TSEKTSSEEHL). 4 disordered regions span residues 631–652 (QCDE…QIQQ), 851–880 (WDPS…LPQA), 1057–1104 (KKSS…SDTD), and 1128–1188 (ERKW…GFTA). The segment covering 1134–1146 (PEPENSESDDSQL) has biased composition (acidic residues). At serine 1203 the chain carries Phosphoserine. Disordered regions lie at residues 1939 to 1976 (MPGE…EGKN), 2014 to 2043 (ERNP…RVNN), 2088 to 2179 (DQKE…PARD), 2254 to 2290 (ESQV…QEEN), 2377 to 2403 (GVEH…SSEA), 2416 to 2444 (MGSH…SPQD), 2479 to 2539 (LNKV…PRLL), 2589 to 2613 (RVAG…EGEA), 2642 to 2678 (LSAD…RKRR), 2696 to 2731 (SSSS…PVEE), 2765 to 2789 (PQET…PRTL), 2821 to 2852 (VQNS…ASPK), 2892 to 2955 (SKHS…PCRQ), 3124 to 3144 (NAQV…PHTL), 3199 to 3241 (HTCS…GLDG), 3274 to 3412 (SLRQ…MPST), 3564 to 3611 (IALG…KGSA), 3766 to 3790 (SDTS…AEET), 3830 to 3884 (LPSV…RVQK), 3906 to 3991 (ASTQ…SPKL), 4033 to 4086 (PEKV…QHLS), and 4153 to 4193 (PGGL…EWSK). The span at 2088-2100 (DQKEQEKTDHAFR) shows a compositional bias: basic and acidic residues. Residues 2103–2118 (SSGNPLPSKDQPSSPR) are compositionally biased toward polar residues. Residues 2119–2129 (QTDDTVFRDSE) are compositionally biased toward basic and acidic residues. A compositionally biased stretch (polar residues) spans 2137 to 2148 (SIGNHPQVQKIT). Over residues 2153-2169 (RSREGVRESEPVREHTH) the composition is skewed to basic and acidic residues. The segment covering 2254–2266 (ESQVAEHVSSSNQ) has biased composition (polar residues). 2 stretches are compositionally biased toward basic and acidic residues: residues 2267-2279 (EEPK…EEMP) and 2379-2391 (EHQD…RSHS). Residues 2500-2510 (QASKPRQKAEK) show a composition bias toward basic and acidic residues. Over residues 2642–2653 (LSADSFESLPNT) the composition is skewed to polar residues. The segment covering 2712-2729 (PSSADPLAPDSPRSSAPV) has biased composition (low complexity). A compositionally biased stretch (basic and acidic residues) spans 2916-2925 (APCRHPREAL). Polar residues predominate over residues 3124 to 3141 (NAQVCQTNPEPPATTQGP). 3 stretches are compositionally biased toward polar residues: residues 3274–3285 (SLRQNETPQPAA), 3320–3339 (SSPT…QELN), and 3368–3387 (SGKS…QKAS). Over residues 3388–3397 (SRLDDGTTDH) the composition is skewed to basic and acidic residues. Low complexity predominate over residues 3857–3872 (SSPSPSSPHSPGLFPS). Positions 3906–3924 (ASTQEPGLSPGSLTLSAPS) are enriched in polar residues. Over residues 3958–3975 (LGGSQRGRSSLQRSNGRS) the composition is skewed to low complexity. Residues 4048 to 4065 (EPSQWQSRTENGGESSAS) are compositionally biased toward polar residues. Residues 4334–4387 (SDIELMLQDYQQAHEEAKVEIARARDQLRERTEQEKLRIHQKIISQLLKEEDKL) adopt a coiled-coil conformation. Residues 4397-4411 (CTSSNGSLSSGMTSG) show a composition bias toward low complexity. The segment at 4397–4419 (CTSSNGSLSSGMTSGYNSSPALS) is disordered. An START domain is found at 4483–4700 (SYQDLAKHVV…IARLASFLGR (218 aa)).

This sequence belongs to the TRAFAC class myosin-kinesin ATPase superfamily. Kinesin family. Interacts with ATAD3A. As to expression, expressed in the central nervous system, muscle cells (heart and skeletal muscle), pancreas, prostate and lung.

The protein resides in the cytoplasm. Its subcellular location is the cytoskeleton. It localises to the microtubule organizing center. The protein localises to the centrosome. It is found in the centriole. The protein resides in the nucleus. In terms of biological role, microtubule-dependent motor protein required for spindle pole assembly during mitosis. Required to stabilize the pericentriolar material (PCM). This chain is StAR-related lipid transfer protein 9 (STARD9), found in Homo sapiens (Human).